The sequence spans 383 residues: 8-amino-7-oxononanoate synthase (383 aa).

Substrate is bound by residues arginine 27 and arginine 34. 114–115 is a pyridoxal 5'-phosphate binding site; the sequence is GY. Histidine 139 contacts substrate. Pyridoxal 5'-phosphate contacts are provided by residues serine 187, 212–215, and 232–235; these read DDAH and TLSK. Residue lysine 235 is modified to N6-(pyridoxal phosphate)lysine. Residue threonine 344 coordinates substrate.

The protein belongs to the class-II pyridoxal-phosphate-dependent aminotransferase family. BioF subfamily. In terms of assembly, homodimer. The cofactor is pyridoxal 5'-phosphate.

It carries out the reaction 6-carboxyhexanoyl-[ACP] + L-alanine + H(+) = (8S)-8-amino-7-oxononanoate + holo-[ACP] + CO2. It functions in the pathway cofactor biosynthesis; biotin biosynthesis. In terms of biological role, catalyzes the decarboxylative condensation of pimeloyl-[acyl-carrier protein] and L-alanine to produce 8-amino-7-oxononanoate (AON), [acyl-carrier protein], and carbon dioxide. This is 8-amino-7-oxononanoate synthase from Methylorubrum extorquens (strain PA1) (Methylobacterium extorquens).